The chain runs to 154 residues: Myoglobin (154 aa).

Positions 2-148 constitute a Globin domain; it reads GLSDGEWQLV…FRNDMAAKYK (147 aa). Serine 4 carries the phosphoserine modification. Nitrite is bound at residue histidine 65. Histidine 65 lines the O2 pocket. Position 68 is a phosphothreonine (threonine 68). Histidine 94 contacts heme b.

It belongs to the globin family. Monomeric.

It is found in the cytoplasm. The protein localises to the sarcoplasm. It carries out the reaction Fe(III)-heme b-[protein] + nitric oxide + H2O = Fe(II)-heme b-[protein] + nitrite + 2 H(+). The catalysed reaction is H2O2 + AH2 = A + 2 H2O. In terms of biological role, monomeric heme protein which primary function is to store oxygen and facilitate its diffusion within muscle tissues. Reversibly binds oxygen through a pentacoordinated heme iron and enables its timely and efficient release as needed during periods of heightened demand. Depending on the oxidative conditions of tissues and cells, and in addition to its ability to bind oxygen, it also has a nitrite reductase activity whereby it regulates the production of bioactive nitric oxide. Under stress conditions, like hypoxia and anoxia, it also protects cells against reactive oxygen species thanks to its pseudoperoxidase activity. The polypeptide is Myoglobin (MB) (Aotus trivirgatus (Three-striped night monkey)).